The chain runs to 631 residues: Phosphomethylpyrimidine synthase (631 aa).

Residues Asn-239, Met-268, Tyr-297, His-333, 353 to 355, 394 to 397, and Glu-433 contribute to the substrate site; these read SRG and DGLR. Residue His-437 participates in Zn(2+) binding. Tyr-460 contributes to the substrate binding site. His-501 lines the Zn(2+) pocket. Residues Cys-581, Cys-584, and Cys-589 each coordinate [4Fe-4S] cluster.

The protein belongs to the ThiC family. In terms of assembly, homodimer. It depends on [4Fe-4S] cluster as a cofactor.

It catalyses the reaction 5-amino-1-(5-phospho-beta-D-ribosyl)imidazole + S-adenosyl-L-methionine = 4-amino-2-methyl-5-(phosphooxymethyl)pyrimidine + CO + 5'-deoxyadenosine + formate + L-methionine + 3 H(+). It participates in cofactor biosynthesis; thiamine diphosphate biosynthesis. Its function is as follows. Catalyzes the synthesis of the hydroxymethylpyrimidine phosphate (HMP-P) moiety of thiamine from aminoimidazole ribotide (AIR) in a radical S-adenosyl-L-methionine (SAM)-dependent reaction. In Salmonella enteritidis PT4 (strain P125109), this protein is Phosphomethylpyrimidine synthase.